The sequence spans 214 residues: Peroxiredoxin-5, mitochondrial (214 aa).

The N-terminal 52 residues, methionine 1 to alanine 52, are a transit peptide targeting the mitochondrion. The region spanning isoleucine 56 to leucine 214 is the Thioredoxin domain. The residue at position 75 (lysine 75) is an N6-acetyllysine. An N6-acetyllysine; alternate modification is found at lysine 83. Residue lysine 83 is modified to N6-succinyllysine; alternate. The active-site Cysteine sulfenic acid (-SOH) intermediate is cysteine 100. Cysteine 100 carries S-palmitoyl cysteine lipidation. Cysteine 100 and cysteine 204 are joined by a disulfide. Lysine 116 is subject to N6-succinyllysine. 2 positions are modified to phosphoserine: serine 171 and serine 182. Residues serine 212–leucine 214 carry the Microbody targeting signal motif.

This sequence belongs to the peroxiredoxin family. Prx5 subfamily. Monomer. Post-translationally, S-palmitoylated. Palmitoylation occurs on the active site, inhibiting its reactivity; therefore PRDX5 palmitoylation status determines its antioxidant capacity. S-palmitoylated. Depalmitoylated by ABHD10. As to expression, widely expressed.

Its subcellular location is the mitochondrion. It localises to the cytoplasm. It is found in the peroxisome matrix. The enzyme catalyses a hydroperoxide + [thioredoxin]-dithiol = an alcohol + [thioredoxin]-disulfide + H2O. In terms of biological role, thiol-specific peroxidase that catalyzes the reduction of hydrogen peroxide and organic hydroperoxides to water and alcohols, respectively. Plays a role in cell protection against oxidative stress by detoxifying peroxides and as sensor of hydrogen peroxide-mediated signaling events. This chain is Peroxiredoxin-5, mitochondrial, found in Homo sapiens (Human).